A 308-amino-acid polypeptide reads, in one-letter code: Ribosomal protein L11 methyltransferase (308 aa).

Positions 148, 169, 191, and 239 each coordinate S-adenosyl-L-methionine.

This sequence belongs to the methyltransferase superfamily. PrmA family.

The protein resides in the cytoplasm. The catalysed reaction is L-lysyl-[protein] + 3 S-adenosyl-L-methionine = N(6),N(6),N(6)-trimethyl-L-lysyl-[protein] + 3 S-adenosyl-L-homocysteine + 3 H(+). Methylates ribosomal protein L11. The sequence is that of Ribosomal protein L11 methyltransferase from Psychrobacter cryohalolentis (strain ATCC BAA-1226 / DSM 17306 / VKM B-2378 / K5).